The sequence spans 220 residues: PKHD-type hydroxylase PCC7424_1929 (220 aa).

One can recognise a Fe2OG dioxygenase domain in the interval 77–173; the sequence is KIHSLLFSRY…RLVAVGWVQS (97 aa). The Fe cation site is built by histidine 95, aspartate 97, and histidine 154. Residue arginine 164 participates in 2-oxoglutarate binding.

Fe(2+) serves as cofactor. The cofactor is L-ascorbate.

This Gloeothece citriformis (strain PCC 7424) (Cyanothece sp. (strain PCC 7424)) protein is PKHD-type hydroxylase PCC7424_1929.